The chain runs to 348 residues: Cylicin-2 (348 aa).

Residues 25–347 (KKSWNQQHFA…DEKKDAKKKG (323 aa)) form a 31 X 3 AA repeats of K-K-X region. 2 disordered regions span residues 35–59 (LLFP…DNTV) and 101–348 (PTRT…KKGK). Composition is skewed to basic and acidic residues over residues 103–159 (RTVE…DAKK), 166–217 (KDAE…EKDS), 238–267 (KADE…AKEI), and 276–342 (KPSS…EKKD). Tandem repeats lie at residues 157-184 (AKKD…EKGG), 185-212 (AKKD…EKGG), and 213-240 (TEKD…VKAD). The tract at residues 157 to 240 (AKKDSKKGKK…AIELQAVKAD (84 aa)) is 3 X approximate tandem repeats.

As to expression, testis.

The protein localises to the cytoplasm. Its subcellular location is the cytoskeleton. It localises to the perinuclear theca. The protein resides in the calyx. In terms of biological role, plays a role in the establishment of normal sperm morphology during spermatogenesis. It is required for acrosome attachment to the nuclear envelope, and proper manchette elongation and disassembly. The polypeptide is Cylicin-2 (CYLC2) (Homo sapiens (Human)).